Here is a 366-residue protein sequence, read N- to C-terminus: Sodium-potassium/proton antiporter ChaA (366 aa).

The Cytoplasmic portion of the chain corresponds to 1-16 (MSNAQEAVKTRHKETS). 2 consecutive transmembrane segments (helical) span residues 17 to 37 (LIFP…QTLP) and 38 to 58 (VVIA…FSVV). At 59 to 74 (RHADVLAHRLGEPYGS) the chain is on the cytoplasmic side. Residues 75 to 95 (LILSLSVVILEVSLISALMAT) traverse the membrane as a helical segment. At 96–106 (GDAAPTLMRDT) the chain is on the periplasmic side. The helical transmembrane segment at 107–127 (LYSIIMIVTGGLVGFSLLLGG) threads the bilayer. Topologically, residues 128-143 (RKFATQYMNLFGIKQY) are cytoplasmic. Residues 144–164 (LIALFPLAIIVLVFPMALPAA) traverse the membrane as a helical segment. The Periplasmic segment spans residues 165-167 (NFS). Residues 168–188 (TGQALLVALISAAMYGVFLLI) traverse the membrane as a helical segment. The Cytoplasmic portion of the chain corresponds to 189 to 216 (QTKTHQSLFVYEHEDDSDDDDPHHGKPS). The chain crosses the membrane as a helical span at residues 217 to 237 (AHSSLWHAIWLIIHLIAVIAV). Residues 238 to 255 (TKMNASSLETLLDSMNAP) are Periplasmic-facing. Residues 256 to 276 (VAFTGFLVALLILSPEGLGAL) traverse the membrane as a helical segment. The Cytoplasmic portion of the chain corresponds to 277 to 290 (KAVLNNQVQRAMNL). A helical transmembrane segment spans residues 291–311 (FFGSVLATISLTVPVVTLIAF). Residues 312–318 (MTGNELQ) are Periplasmic-facing. The helical transmembrane segment at 319–339 (FALGAPEMVVMVASLVLCHIS) threads the bilayer. At 340–345 (FSTGRT) the chain is on the cytoplasmic side. A helical membrane pass occupies residues 346–366 (NVLNGAAHLALFAAYLMTIFA).

The protein belongs to the Ca(2+):cation antiporter (CaCA) (TC 2.A.19) family.

It localises to the cell inner membrane. The enzyme catalyses Na(+)(in) + H(+)(out) = Na(+)(out) + H(+)(in). The catalysed reaction is K(+)(in) + H(+)(out) = K(+)(out) + H(+)(in). It catalyses the reaction Ca(2+)(in) + H(+)(out) = Ca(2+)(out) + H(+)(in). Pronounced pH dependence with sodium as substrate. Ca(2+)/H(+) and Na(+)/H(+) antiporter activities are both inhibited by magnesium. Ca(2+)/H(+) activity is inhibited by the proton ionophore carbonyl cyanide m-chlorophenylhydrazone (CCCP). Its function is as follows. Sodium exporter that functions mainly at alkaline pH. Can also function as a potassium/proton and calcium/proton antiporter at alkaline pH. Does not play a major role in calcium export. The K(+)/H(+) antiporter activity may enable E.coli to adapt to K(+) salinity stress and to maintain K(+) homeostasis. This Escherichia coli (strain K12) protein is Sodium-potassium/proton antiporter ChaA.